A 242-amino-acid chain; its full sequence is Sugar fermentation stimulation protein homolog (242 aa).

The protein belongs to the SfsA family.

This Methanosphaera stadtmanae (strain ATCC 43021 / DSM 3091 / JCM 11832 / MCB-3) protein is Sugar fermentation stimulation protein homolog.